Here is a 436-residue protein sequence, read N- to C-terminus: 3-ketoacyl-CoA thiolase (436 aa).

Catalysis depends on Cys-99, which acts as the Acyl-thioester intermediate. Residues His-392 and Cys-422 each act as proton acceptor in the active site.

This sequence belongs to the thiolase-like superfamily. Thiolase family. In terms of assembly, heterotetramer of two alpha chains (FadJ) and two beta chains (FadI).

It localises to the cytoplasm. It carries out the reaction an acyl-CoA + acetyl-CoA = a 3-oxoacyl-CoA + CoA. Its pathway is lipid metabolism; fatty acid beta-oxidation. Functionally, catalyzes the final step of fatty acid oxidation in which acetyl-CoA is released and the CoA ester of a fatty acid two carbons shorter is formed. This Shewanella piezotolerans (strain WP3 / JCM 13877) protein is 3-ketoacyl-CoA thiolase.